Here is a 155-residue protein sequence, read N- to C-terminus: 6,7-dimethyl-8-ribityllumazine synthase (155 aa).

5-amino-6-(D-ribitylamino)uracil is bound by residues F24, 58 to 60 (AFE), and 82 to 84 (AII). (2S)-2-hydroxy-3-oxobutyl phosphate is bound at residue 87–88 (ST). H90 serves as the catalytic Proton donor. F115 is a 5-amino-6-(D-ribitylamino)uracil binding site. R129 serves as a coordination point for (2S)-2-hydroxy-3-oxobutyl phosphate.

This sequence belongs to the DMRL synthase family.

The catalysed reaction is (2S)-2-hydroxy-3-oxobutyl phosphate + 5-amino-6-(D-ribitylamino)uracil = 6,7-dimethyl-8-(1-D-ribityl)lumazine + phosphate + 2 H2O + H(+). It functions in the pathway cofactor biosynthesis; riboflavin biosynthesis; riboflavin from 2-hydroxy-3-oxobutyl phosphate and 5-amino-6-(D-ribitylamino)uracil: step 1/2. In terms of biological role, catalyzes the formation of 6,7-dimethyl-8-ribityllumazine by condensation of 5-amino-6-(D-ribitylamino)uracil with 3,4-dihydroxy-2-butanone 4-phosphate. This is the penultimate step in the biosynthesis of riboflavin. This chain is 6,7-dimethyl-8-ribityllumazine synthase, found in Chlorobium luteolum (strain DSM 273 / BCRC 81028 / 2530) (Pelodictyon luteolum).